The sequence spans 188 residues: Elongation factor P (188 aa).

It belongs to the elongation factor P family.

It localises to the cytoplasm. It functions in the pathway protein biosynthesis; polypeptide chain elongation. Involved in peptide bond synthesis. Stimulates efficient translation and peptide-bond synthesis on native or reconstituted 70S ribosomes in vitro. Probably functions indirectly by altering the affinity of the ribosome for aminoacyl-tRNA, thus increasing their reactivity as acceptors for peptidyl transferase. In Rickettsia massiliae (strain Mtu5), this protein is Elongation factor P.